A 415-amino-acid polypeptide reads, in one-letter code: Gamma-glutamyl phosphate reductase (415 aa).

It belongs to the gamma-glutamyl phosphate reductase family.

Its subcellular location is the cytoplasm. It carries out the reaction L-glutamate 5-semialdehyde + phosphate + NADP(+) = L-glutamyl 5-phosphate + NADPH + H(+). Its pathway is amino-acid biosynthesis; L-proline biosynthesis; L-glutamate 5-semialdehyde from L-glutamate: step 2/2. Functionally, catalyzes the NADPH-dependent reduction of L-glutamate 5-phosphate into L-glutamate 5-semialdehyde and phosphate. The product spontaneously undergoes cyclization to form 1-pyrroline-5-carboxylate. This is Gamma-glutamyl phosphate reductase from Listeria welshimeri serovar 6b (strain ATCC 35897 / DSM 20650 / CCUG 15529 / CIP 8149 / NCTC 11857 / SLCC 5334 / V8).